The following is a 135-amino-acid chain: MADKLHFSLVSPARELFSGQVDHVIAPGTEGEFGVLVNHAPFMTTLKNGVVRVLEGDVVRHRFYVRGGFADVTPAGLTILAEEARNLSDASAQEIDVEVEAAKLKLLELDAGDTKRAVLEHQISYLEGLRSALAN.

Belongs to the ATPase epsilon chain family. In terms of assembly, F-type ATPases have 2 components, CF(1) - the catalytic core - and CF(0) - the membrane proton channel. CF(1) has five subunits: alpha(3), beta(3), gamma(1), delta(1), epsilon(1). CF(0) has three main subunits: a, b and c.

The protein localises to the cell inner membrane. Produces ATP from ADP in the presence of a proton gradient across the membrane. This chain is ATP synthase epsilon chain, found in Hyphomonas neptunium (strain ATCC 15444).